We begin with the raw amino-acid sequence, 551 residues long: Solute carrier family 22 member 6 (551 aa).

Over 1-9 the chain is Cytoplasmic; that stretch reads MAFNDLLKQ. Residues 10 to 30 traverse the membrane as a helical segment; sequence VGGVGRFQLIQVTMVVAPLLL. Residues 31–135 lie on the Extracellular side of the membrane; that stretch reads MASHNTLQNF…LVCSHRAFRQ (105 aa). N-linked (GlcNAc...) asparagine glycosylation is found at asparagine 39, asparagine 56, asparagine 92, and asparagine 113. Residues 136-156 traverse the membrane as a helical segment; sequence LAQSLYMVGVLLGAMVFGYLA. At 157-164 the chain is on the cytoplasmic side; it reads DRLGRRKV. Residues 165-187 traverse the membrane as a helical segment; the sequence is LILNYLQTAVSGTCAAYAPNYTV. At 188 to 195 the chain is on the extracellular side; the sequence is YCVFRLLS. The helical transmembrane segment at 196-216 threads the bilayer; sequence GMSLASIAINCMTLNVEWMPI. Residues 217-224 are Cytoplasmic-facing; sequence HTRAYVGT. The helical transmembrane segment at 225 to 245 threads the bilayer; that stretch reads LIGYVYSLGQFLLAGIAYAVP. Residues 246 to 248 are Extracellular-facing; sequence HWR. Residues 249–269 traverse the membrane as a helical segment; it reads HLQLVVSVPFFIAFIYSWFFI. The Cytoplasmic portion of the chain corresponds to 270-337; that stretch reads ESARWYSSSG…ELLRCPTLRH (68 aa). A helical transmembrane segment spans residues 338 to 358; that stretch reads LFLCLSMLWFATSFAYYGLVM. The Extracellular portion of the chain corresponds to 359–368; that stretch reads DLQGFGVSMY. The chain crosses the membrane as a helical span at residues 369-389; the sequence is LIQVIFGAVDLPAKFVCFLVI. Over 390–395 the chain is Cytoplasmic; sequence NSMGRR. The helical transmembrane segment at 396-416 threads the bilayer; sequence PAQMASLLLAGICILVNGIIP. Over 417-425 the chain is Extracellular; sequence KSHTIIRTS. The helical transmembrane segment at 426 to 446 threads the bilayer; sequence LAVLGKGCLASSFNCIFLYTG. Residues 447–484 lie on the Cytoplasmic side of the membrane; sequence ELYPTVIRQTGLGMGSTMARVGSIVSPLVSMTAEFYPS. A helical membrane pass occupies residues 485–505; that stretch reads MPLFIFGAVPVVASAVTALLP. The Extracellular portion of the chain corresponds to 506–551; it reads ETLGQPLPDTVQDLKSRSRGKQNQQQQEQQKQMMPLQASTQEKNGL. Positions 514–551 are disordered; the sequence is DTVQDLKSRSRGKQNQQQQEQQKQMMPLQASTQEKNGL. Positions 526–537 are enriched in low complexity; that stretch reads KQNQQQQEQQKQ. A compositionally biased stretch (polar residues) spans 542–551; sequence QASTQEKNGL.

This sequence belongs to the major facilitator (TC 2.A.1) superfamily. Organic cation transporter (TC 2.A.1.19) family. Glycosylated. Glycosylation is necessary for proper targeting of the transporter to the plasma membrane. Highly expressed in kidney; in the particular segment of the proximal tubule. In kidney, found preferentially in the cortex and outer medulla and weakly in the inner medulla. Expressed to a lower extent in brain.

It localises to the cell membrane. The protein localises to the basolateral cell membrane. Its subcellular location is the basal cell membrane. It catalyses the reaction (6R)-L-erythro-5,6,7,8-tetrahydrobiopterin(out) + a dicarboxylate(in) = (6R)-L-erythro-5,6,7,8-tetrahydrobiopterin(in) + a dicarboxylate(out). The enzyme catalyses L-erythro-7,8-dihydrobiopterin(out) + a dicarboxylate(in) = L-erythro-7,8-dihydrobiopterin(in) + a dicarboxylate(out). The catalysed reaction is L-sepiapterin(out) + a dicarboxylate(in) = L-sepiapterin(in) + a dicarboxylate(out). It carries out the reaction prostaglandin F2alpha(out) + a dicarboxylate(in) = prostaglandin F2alpha(in) + a dicarboxylate(out). It catalyses the reaction prostaglandin E2(out) + a dicarboxylate(in) = prostaglandin E2(in) + a dicarboxylate(out). The enzyme catalyses 3',5'-cyclic AMP(out) + a dicarboxylate(in) = 3',5'-cyclic AMP(in) + a dicarboxylate(out). The catalysed reaction is 3',5'-cyclic GMP(out) + a dicarboxylate(in) = 3',5'-cyclic GMP(in) + a dicarboxylate(out). It carries out the reaction urate(out) + a dicarboxylate(in) = urate(in) + a dicarboxylate(out). It catalyses the reaction kynurenate(out) + glutarate(in) = kynurenate(in) + glutarate(out). The enzyme catalyses (indol-3-yl)acetate(out) + a dicarboxylate(in) = (indol-3-yl)acetate(in) + a dicarboxylate(out). The catalysed reaction is indoxyl sulfate(out) + a dicarboxylate(in) = indoxyl sulfate(in) + a dicarboxylate(out). It carries out the reaction N-benzoylglycine(out) + a dicarboxylate(in) = N-benzoylglycine(in) + a dicarboxylate(out). It catalyses the reaction 3-carboxy-4-methyl-5-propyl-2-furanpropanoate(out) + a dicarboxylate(in) = 3-carboxy-4-methyl-5-propyl-2-furanpropanoate(in) + a dicarboxylate(out). Its function is as follows. Secondary active transporter that functions as a Na(+)-independent organic anion (OA)/dicarboxylate antiporter where the uptake of one molecule of OA into the cell is coupled with an efflux of one molecule of intracellular dicarboxylate such as alpha-ketoglutarate or glutarate. Mediates the uptake of OA across the basolateral side of proximal tubule epithelial cells, thereby contributing to the renal elimination of endogenous OA from the systemic circulation into the urine. Function as a biopterin transporters involved in the uptake and the secretion of coenzymes tetrahydrobiopterin (BH4) dihydrobiopterin (BH2) and sepiapterin to urine, thereby determining baseline levels of blood biopterins. Transports prostaglandin E2 (PGE2) and prostaglandin F2-alpha (PGF2-alpha) and may contribute to their renal excretion. Also mediates the uptake of cyclic nucleotides such as cAMP and cGMP. Involved in the transport of neuroactive tryptophan metabolites kynurenate (KYNA) and xanthurenate (XA) and may contribute to their secretion from the brain. May transport glutamate. Also involved in the disposition of uremic toxins and potentially toxic xenobiotics by the renal organic anion secretory pathway, helping reduce their undesired toxicological effects on the body. Uremic toxins include the indoxyl sulfate (IS), hippurate, indole acetate (IA), 3-carboxy-4- methyl-5-propyl-2-furanpropionate(CMPF) and urate. Xenobiotics include the mycotoxin ochratoxin (OTA). May also contribute to the transport of organic compounds in testes across the blood-testis-barrier. May also work as a bidirectional OA/dicarboxylate exchanger. The chain is Solute carrier family 22 member 6 from Rattus norvegicus (Rat).